Consider the following 570-residue polypeptide: Interleukin-1 receptor accessory protein (570 aa).

A signal peptide spans 1–20; the sequence is MGLLWYLMSLSFYGILQSHA. 3 Ig-like C2-type domains span residues 21–128, 139–230, and 243–348; these read SERC…VAFP, NSAM…RTVT, and PQIY…AKVK. The Extracellular segment spans residues 21–367; sequence SERCDDWGLD…VELACGFGAT (347 aa). 5 cysteine pairs are disulfide-bonded: cysteine 24-cysteine 122, cysteine 47-cysteine 114, cysteine 137-cysteine 181, cysteine 160-cysteine 212, and cysteine 266-cysteine 332. Asparagine 57 carries an N-linked (GlcNAc...) asparagine glycan. The tract at residues 69–85 is essential for interaction with PTPRD; sequence IWYWTRQDRDLEEPINF. Residues asparagine 107, asparagine 111, and asparagine 118 are each glycosylated (N-linked (GlcNAc...) asparagine). Residues asparagine 196, asparagine 209, and asparagine 299 are each glycosylated (N-linked (GlcNAc...) asparagine). Residues 368 to 388 traverse the membrane as a helical segment; it reads VFLVVVLIVVYHVYWLEMVLF. Residues 389-570 lie on the Cytoplasmic side of the membrane; that stretch reads YRAHFGTDET…GLSYSSLKNV (182 aa). A TIR domain is found at 403–546; sequence KEYDIYVSYA…RFWKQLQVAM (144 aa). Glutamate 482 is a catalytic residue. The disordered stretch occupies residues 550 to 570; that stretch reads KSPRWSSNDKQGLSYSSLKNV. A compositionally biased stretch (polar residues) spans 553–570; the sequence is RWSSNDKQGLSYSSLKNV.

The protein belongs to the interleukin-1 receptor family. As to quaternary structure, the interleukin-36 receptor complex is a heterodimer of IL1RL2 and IL1RAP; the association is inhibited by IL36RN. The interleukin-1 receptor complex is a heterodimer of IL1R1 and IL1RAP. Associates with IL1R2 to form a non-signaling interleukin-1 receptor complex. Interacts with IL-33-bound IL1RL1 to form the minimal interleukin-33 signaling complex with a 1:1:1 stoichiometry. Interacts with KIT (independently of stimulation with KITLG/SCF). A mast cell-specific KITLG/SCF-induced interleukin-33 signaling complex contains IL1RL1, IL1RAP, KIT and MYD88. Interacts (via the first immunoglobilin domain) with PTPRD (via the third immunoglobilin domain); induces pre- and postsynaptic differentiation of neurons. In terms of tissue distribution, detected in lung, brain, spleen, thymus and liver. Expressed in brain endothelial cells, astrocytes, microglia and neurons. Isoform 3 is predominantly expressed in brain; expressed in hippocampal neurons.

It localises to the cell membrane. The protein localises to the secreted. It carries out the reaction NAD(+) + H2O = ADP-D-ribose + nicotinamide + H(+). Functionally, coreceptor for IL1RL2 in the IL-36 signaling system. Coreceptor with IL1R1 in the IL-1 signaling system. Associates with IL1R1 bound to IL1B to form the high affinity interleukin-1 receptor complex which mediates interleukin-1-dependent activation of NF-kappa-B and other pathways. Signaling involves the recruitment of adapter molecules such as TOLLIP, MYD88, and IRAK1 or IRAK2 via the respective TIR domains of the receptor/coreceptor subunits. Recruits TOLLIP to the signaling complex. Does not bind to interleukin-1 alone; binding of IL1RN to IL1R1, prevents its association with IL1R1 to form a signaling complex. The cellular response is modulated through a non-signaling association with the membrane IL1R2 decoy receptor. Secreted forms (isoforms 2 and 3) associate with secreted ligand-bound IL1R2 and increase the affinity of secreted IL1R2 for IL1B; this complex formation may be the dominant mechanism for neutralization of IL1B by secreted/soluble receptors. Coreceptor for IL1RL1 in the IL-33 signaling system. Can bidirectionally induce pre- and postsynaptic differentiation of neurons by trans-synaptically binding to PTPRD. May play a role in IL1B-mediated costimulation of IFNG production from T-helper 1 (Th1) cells. Its function is as follows. Associates with secreted ligand-bound IL1R2 and increases the affinity of secreted IL1R2 for IL1B; this complex formation may be the dominant mechanism for neutralization of IL1B by secreted/soluble receptors. Enhances the ability of secreted IL1R1 to inhibit IL-33 signaling. In terms of biological role, required for Src phosphorylation by IL1B. Required for IL1B-potentiated NMDA-induced calcium influx in neurons acting in cooperation with IL1R1 isoform 2 to mediate Akt kinase activation. The protein is Interleukin-1 receptor accessory protein (Il1rap) of Mus musculus (Mouse).